A 238-amino-acid polypeptide reads, in one-letter code: DNA repair protein RecO (238 aa).

Belongs to the RecO family.

Functionally, involved in DNA repair and RecF pathway recombination. The protein is DNA repair protein RecO of Cereibacter sphaeroides (strain ATCC 17023 / DSM 158 / JCM 6121 / CCUG 31486 / LMG 2827 / NBRC 12203 / NCIMB 8253 / ATH 2.4.1.) (Rhodobacter sphaeroides).